Here is a 2443-residue protein sequence, read N- to C-terminus: Non-reducing polyketide synthase olcA (2443 aa).

A Ketosynthase family 3 (KS3) domain is found at Ile-5–Ser-442. Active-site for beta-ketoacyl synthase activity residues include Cys-178, His-317, and His-362. The segment at Gly-550 to Leu-885 is malonyl-CoA:ACP transacylase (MAT) domain. Ser-645 (for acyl/malonyl transferase activity) is an active-site residue. The tract at residues Asn-940 to Ala-1070 is N-terminal hotdog fold. Residues Asn-940–Asp-1231 enclose the PKS/mFAS DH domain. The tract at residues Ala-989 to Arg-1497 is product template (PT) domain. The segment at Met-1085–Asp-1231 is C-terminal hotdog fold. The tract at residues Asn-1771–Pro-2159 is methyltransferase (CMeT) domain. One can recognise a Carrier domain in the interval Glu-2359–Leu-2434. Position 2394 is an O-(pantetheine 4'-phosphoryl)serine (Ser-2394).

It catalyses the reaction nicotinyl-CoA + 2 malonyl-CoA + H(+) = 4-hydroxy-6-(pyridin-3-yl)-2H-pyran-2-one + 2 CO2 + 3 CoA. It participates in secondary metabolite biosynthesis; terpenoid biosynthesis. Non-reducing polyketide synthase; part of the gene cluster that mediates the biosynthesis of 15-deoxyoxalicine B. The first step of the pathway is the synthesis of nicotinyl-CoA from nicotinic acid by the nicotinic acid-CoA ligase olcI. Nicotinyl-CoA is then a substrate of polyketide synthase olcA to produce 4-hydroxy-6-(3-pyridinyl)-2H-pyran-2-one (HPPO) which is further prenylated by the polyprenyl transferase olcH to yield geranylgeranyl-HPPO. Geranylgeranyl pyrophosphate is provided by the cluster-specific geranylgeranyl pyrophosphate synthase olcC. The FAD-dependent monooxygenase olcE catalyzes the epoxidation of geranylgeranyl-HPPO and the terpene cyclase olcD catalyzes the cyclization of the terpenoid component, resulting in the formation of the tricyclic terpene moiety seen in predecaturin E. The cytochrome P450 monooxygenase then catalyzes the allylic oxidation of predecaturin E, which is followed by spirocylization with concomitant loss of one molecule of water to form decaturin E. Decaturin E is the substrate of the cytochrome P450 monooxygenase olcJ which hydroxylates it at the C-29 position to form decaturin F. The short-chain dehydrogenase/reductase olcF may catalyze the oxidation of decaturin F to generate the 29-hydroxyl-27-one intermediate, and subsequent hemiacetal formation probably leads to the formation of decaturin C. The dioxygenase olcK may be a peroxisomal enzyme that catalyzes the hydroxylation of decaturin C into decaturin A once decaturin C is shuttled into the peroxisome by the MFS transporter olcL. Finally the cytochrome P450 monooxygenase olcB catalyzes the oxidative rearrangement to yield 15-deoxyoxalicine B. In the absence of olcJ, decaturin E may be shunted to a pathway in which it is oxidized to a ketone, possibly by olcF, to form decaturin D, which undergoes further allylic oxidation to yield decaturin G. Moreover, in the absence of oclK or oclL, oclB can convert decaturin C into 15-deoxyoxalicine A. The protein is Non-reducing polyketide synthase olcA of Penicillium canescens.